The primary structure comprises 436 residues: MGVRAAPSCAAAPAAAGAEQSRRPGLWPPSPPPPLLLLLLLSLGLLHAGDCQQPTQCRIQKCTTDFVALTAHLNSAADGFDSEFCKALRAYAGCTQRTSKACRGNLVYHSAVLGISDLMSQRNCSKDGPTSSTNPEVTHDPCNYHSHGGVREHGGGDQRPPNYLFCGLFGDPHLRTFKDHFQTCKVEGAWPLIDNNYLSVQVTNVPVVPGSSATATNKVTIIFKAQHECTDQKVYQAVTDDLPAAFVDGTTSGGDGDVKSLHIVEKESGRYVEMHARYIGTTVFVRQLGRYLTLAIRMPEDLAMSYEESQDLQLCVNGCPMSECIDDGQGQVSAILGHSLPHTTSVQAWPGYTLETASTQCHEKMPVKDIYFQSCVFDLLTTGDANFTAAAHSALEDVEALHPRKERWHIFPSSCGGCRDLPVGLGLTCLILIMFL.

Residues Met1–Ala48 form the signal peptide. The N-linked (GlcNAc...) asparagine glycan is linked to Asn123. 2 disulfides stabilise this stretch: Cys142-Cys229 and Cys166-Cys315. Residue Asn386 is glycosylated (N-linked (GlcNAc...) asparagine). Cys415 is lipidated: GPI-anchor amidated cysteine. Residues Gly416 to Leu436 constitute a propeptide, removed in mature form.

This sequence belongs to the repulsive guidance molecule (RGM) family. As to quaternary structure, homooligomer. Interacts with DRGX. Interacts with BMP2 and BMP4. Interacts with the BMP type I receptors ACVR1, BMPR1A and BMPR1B and with the BMP type II receptor ACVR2B. The functional complex with its receptor NEO1/neogenin appears to be a heterotetramer with a 2:2 stoichiometry, RGM molecules acting as staples that bring two NEO1 receptors together without interacting themselves, this arrangement leads to activation of downstream signaling via RhoA. GPI-anchored. Post-translationally, autocatalytically cleaved at low pH; the two chains remain linked via two disulfide bonds. In terms of tissue distribution, detected in neonatal and adult dorsal root ganglion sensory neurons, spinal cord, and brain (at protein level). Also expressed at high levels in retinal ganglion cells of developing mouse, extending to the optic nerve (at protein level). Expressed in testis, epididymis, ovary, uterus, and pituitary.

The protein localises to the cell membrane. It is found in the membrane raft. Member of the repulsive guidance molecule (RGM) family that contributes to the patterning of the developing nervous system. Acts as a bone morphogenetic protein (BMP) coreceptor that potentiates BMP signaling. Promotes neuronal adhesion. May inhibit neurite outgrowth. The sequence is that of Repulsive guidance molecule B from Mus musculus (Mouse).